The following is an 87-amino-acid chain: Large ribosomal subunit protein bL31B (87 aa).

This sequence belongs to the bacterial ribosomal protein bL31 family. Type B subfamily. As to quaternary structure, part of the 50S ribosomal subunit.

The polypeptide is Large ribosomal subunit protein bL31B (Corynebacterium kroppenstedtii (strain DSM 44385 / JCM 11950 / CIP 105744 / CCUG 35717)).